The following is a 343-amino-acid chain: 4-hydroxyproline 2-epimerase 1 (343 aa).

Ser90 acts as the Proton acceptor in catalysis. Substrate is bound by residues 91-92, Asp251, and 256-257; these read GS and GT.

This sequence belongs to the proline racemase family.

The enzyme catalyses trans-4-hydroxy-L-proline = cis-4-hydroxy-D-proline. Functionally, catalyzes the epimerization of trans-4-hydroxy-L-proline (t4LHyp) to cis-4-hydroxy-D-proline (c4DHyp) in vitro, albeit with low efficiency. The physiological substrate may be different. Displays no proline racemase activity. The polypeptide is 4-hydroxyproline 2-epimerase 1 (Brucella anthropi (strain ATCC 49188 / DSM 6882 / CCUG 24695 / JCM 21032 / LMG 3331 / NBRC 15819 / NCTC 12168 / Alc 37) (Ochrobactrum anthropi)).